The primary structure comprises 330 residues: GTP 3',8-cyclase (330 aa).

A Radical SAM core domain is found at 14-225; sequence RFGRTVDYVR…RERLADAYPE (212 aa). Arginine 23 contacts GTP. Positions 30 and 34 each coordinate [4Fe-4S] cluster. Residue tyrosine 36 participates in S-adenosyl-L-methionine binding. Position 37 (cysteine 37) interacts with [4Fe-4S] cluster. A GTP-binding site is contributed by arginine 70. Residue glycine 74 coordinates S-adenosyl-L-methionine. Threonine 101 contributes to the GTP binding site. Serine 125 serves as a coordination point for S-adenosyl-L-methionine. Residue lysine 162 coordinates GTP. [4Fe-4S] cluster-binding residues include cysteine 259 and cysteine 262. GTP is bound at residue 264-266; it reads KLR. A [4Fe-4S] cluster-binding site is contributed by cysteine 276. A compositionally biased stretch (basic and acidic residues) spans 309-318; sequence KPKDGLKSSH. The tract at residues 309 to 330 is disordered; the sequence is KPKDGLKSSHDTAASSMSQIGG. Over residues 319–330 the composition is skewed to polar residues; sequence DTAASSMSQIGG.

The protein belongs to the radical SAM superfamily. MoaA family. In terms of assembly, monomer and homodimer. [4Fe-4S] cluster is required as a cofactor.

The catalysed reaction is GTP + AH2 + S-adenosyl-L-methionine = (8S)-3',8-cyclo-7,8-dihydroguanosine 5'-triphosphate + 5'-deoxyadenosine + L-methionine + A + H(+). It participates in cofactor biosynthesis; molybdopterin biosynthesis. Its function is as follows. Catalyzes the cyclization of GTP to (8S)-3',8-cyclo-7,8-dihydroguanosine 5'-triphosphate. The sequence is that of GTP 3',8-cyclase from Chlorobaculum tepidum (strain ATCC 49652 / DSM 12025 / NBRC 103806 / TLS) (Chlorobium tepidum).